A 105-amino-acid chain; its full sequence is Putative zinc finger protein 861 (105 aa).

The segment at 75-97 (YTCKPCGNAFRFHHSFHIHERPH) adopts a C2H2-type zinc-finger fold.

In Homo sapiens (Human), this protein is Putative zinc finger protein 861 (ZNF861P).